A 551-amino-acid chain; its full sequence is Dihydroxy-acid dehydratase (551 aa).

Aspartate 78 is a Mg(2+) binding site. Cysteine 119 provides a ligand contact to [2Fe-2S] cluster. Aspartate 120 and lysine 121 together coordinate Mg(2+). An N6-carboxylysine modification is found at lysine 121. Cysteine 191 contacts [2Fe-2S] cluster. Glutamate 441 contacts Mg(2+). Serine 467 acts as the Proton acceptor in catalysis.

The protein belongs to the IlvD/Edd family. Homodimer. The cofactor is [2Fe-2S] cluster. Mg(2+) serves as cofactor.

The catalysed reaction is (2R)-2,3-dihydroxy-3-methylbutanoate = 3-methyl-2-oxobutanoate + H2O. It carries out the reaction (2R,3R)-2,3-dihydroxy-3-methylpentanoate = (S)-3-methyl-2-oxopentanoate + H2O. The protein operates within amino-acid biosynthesis; L-isoleucine biosynthesis; L-isoleucine from 2-oxobutanoate: step 3/4. Its pathway is amino-acid biosynthesis; L-valine biosynthesis; L-valine from pyruvate: step 3/4. In terms of biological role, functions in the biosynthesis of branched-chain amino acids. Catalyzes the dehydration of (2R,3R)-2,3-dihydroxy-3-methylpentanoate (2,3-dihydroxy-3-methylvalerate) into 2-oxo-3-methylpentanoate (2-oxo-3-methylvalerate) and of (2R)-2,3-dihydroxy-3-methylbutanoate (2,3-dihydroxyisovalerate) into 2-oxo-3-methylbutanoate (2-oxoisovalerate), the penultimate precursor to L-isoleucine and L-valine, respectively. This chain is Dihydroxy-acid dehydratase, found in Pyrococcus furiosus (strain ATCC 43587 / DSM 3638 / JCM 8422 / Vc1).